The sequence spans 245 residues: Orotidine 5'-phosphate decarboxylase (245 aa).

Residues D22, K44, 71–80, T131, R192, Q201, G221, and R222 each bind substrate; that span reads DLKFHDIPNT. K73 functions as the Proton donor in the catalytic mechanism.

The protein belongs to the OMP decarboxylase family. Type 1 subfamily. In terms of assembly, homodimer.

The enzyme catalyses orotidine 5'-phosphate + H(+) = UMP + CO2. It functions in the pathway pyrimidine metabolism; UMP biosynthesis via de novo pathway; UMP from orotate: step 2/2. Functionally, catalyzes the decarboxylation of orotidine 5'-monophosphate (OMP) to uridine 5'-monophosphate (UMP). In Salmonella typhimurium (strain LT2 / SGSC1412 / ATCC 700720), this protein is Orotidine 5'-phosphate decarboxylase.